An 84-amino-acid polypeptide reads, in one-letter code: Beta-defensin 119 (84 aa).

The first 21 residues, 1-21 (MKFLFLFLAILLATEVPVISG), serve as a signal peptide directing secretion. Cystine bridges form between cysteine 28-cysteine 55, cysteine 35-cysteine 49, and cysteine 39-cysteine 56.

The protein belongs to the beta-defensin family. Abundant expression in the male reproductive tract only. Expressed abundantly in testis, while expression in epididymis decreased gradually from caput to cauda.

The protein localises to the secreted. Its function is as follows. Has antibacterial activity. This Macaca mulatta (Rhesus macaque) protein is Beta-defensin 119 (DEFB119).